Here is a 422-residue protein sequence, read N- to C-terminus: MDFLEIVGQVPLKGGVEISGAKNSALPILAATLLSQQEVKIKSLPQVVDIKAMALLLQNLGAELEWLDPNTLQIGAKSLHHTEATYDLVRKMRASILVLGPLLARFKECLVSLPGGCAIGARPVDLHLKAMQQLGAEIKIEQGYIHAKASKGLKGNDILFDKISVTGTENALMAASLAKGITRIINAAKEPEIAQLCTFLQSGGVEIEGVGSSELKIRGVENDALNLKDIQIIPDRIEAGTYLCVGAITNSQLKIHRIIPNHLQAITDKLIEIGFSLDIQENSIEIYPAKKRQAFEITTKEYPGFPTDMQAQFMALATQCLGTSVIEETLFENRFMHASELQRLGANISLKTNVATISGSTELTGSDVMATDLRASSALILAALVAKGVSRVHRIYHLDRGYERLEDKINALGAKVLRLKEK.

22–23 (KN) contacts phosphoenolpyruvate. Residue R93 coordinates UDP-N-acetyl-alpha-D-glucosamine. C117 acts as the Proton donor in catalysis. Position 117 is a 2-(S-cysteinyl)pyruvic acid O-phosphothioketal (C117). UDP-N-acetyl-alpha-D-glucosamine contacts are provided by residues 122–126 (RPVDL), D308, and L330.

The protein belongs to the EPSP synthase family. MurA subfamily.

The protein resides in the cytoplasm. The enzyme catalyses phosphoenolpyruvate + UDP-N-acetyl-alpha-D-glucosamine = UDP-N-acetyl-3-O-(1-carboxyvinyl)-alpha-D-glucosamine + phosphate. It functions in the pathway cell wall biogenesis; peptidoglycan biosynthesis. Functionally, cell wall formation. Adds enolpyruvyl to UDP-N-acetylglucosamine. The polypeptide is UDP-N-acetylglucosamine 1-carboxyvinyltransferase (Helicobacter pylori (strain P12)).